A 101-amino-acid chain; its full sequence is Interleukin-8 (101 aa).

An N-terminal signal peptide occupies residues 1-22; the sequence is MTSKLAVALLAAFLLSAALCEG. A Citrulline modification is found at arginine 27. Cystine bridges form between cysteine 34–cysteine 61 and cysteine 36–cysteine 77.

Belongs to the intercrine alpha (chemokine CxC) family. In terms of assembly, homodimer. Interacts with TNFAIP6 (via Link domain); this interaction interferes with chemokine binding to glycosaminoglycans. Citrullination at Arg-27 prevents proteolysis, and dampens tissue inflammation, it also enhances leukocytosis, possibly through impaired chemokine clearance from the blood circulation.

It is found in the secreted. Chemotactic factor that mediates inflammatory response by attracting neutrophils, basophils, and T-cells to clear pathogens and protect the host from infection. Also plays an important role in neutrophil activation. Released in response to an inflammatory stimulus, exerts its effect by binding to the G-protein-coupled receptors CXCR1 and CXCR2, primarily found in neutrophils, monocytes and endothelial cells. G-protein heterotrimer (alpha, beta, gamma subunits) constitutively binds to CXCR1/CXCR2 receptor and activation by IL8 leads to beta and gamma subunits release from Galpha (GNAI2 in neutrophils) and activation of several downstream signaling pathways including PI3K and MAPK pathways. This chain is Interleukin-8 (CXCL8), found in Cercocebus atys (Sooty mangabey).